A 298-amino-acid chain; its full sequence is Lipoyl synthase (298 aa).

[4Fe-4S] cluster contacts are provided by cysteine 43, cysteine 48, cysteine 54, cysteine 69, cysteine 73, cysteine 76, and serine 280. Positions 55–269 (FSSGTATFLI…AACGRGMGIP (215 aa)) constitute a Radical SAM core domain.

The protein belongs to the radical SAM superfamily. Lipoyl synthase family. [4Fe-4S] cluster is required as a cofactor.

The protein localises to the cytoplasm. The catalysed reaction is [[Fe-S] cluster scaffold protein carrying a second [4Fe-4S](2+) cluster] + N(6)-octanoyl-L-lysyl-[protein] + 2 oxidized [2Fe-2S]-[ferredoxin] + 2 S-adenosyl-L-methionine + 4 H(+) = [[Fe-S] cluster scaffold protein] + N(6)-[(R)-dihydrolipoyl]-L-lysyl-[protein] + 4 Fe(3+) + 2 hydrogen sulfide + 2 5'-deoxyadenosine + 2 L-methionine + 2 reduced [2Fe-2S]-[ferredoxin]. It functions in the pathway protein modification; protein lipoylation via endogenous pathway; protein N(6)-(lipoyl)lysine from octanoyl-[acyl-carrier-protein]: step 2/2. Functionally, catalyzes the radical-mediated insertion of two sulfur atoms into the C-6 and C-8 positions of the octanoyl moiety bound to the lipoyl domains of lipoate-dependent enzymes, thereby converting the octanoylated domains into lipoylated derivatives. This is Lipoyl synthase from Nitratidesulfovibrio vulgaris (strain DP4) (Desulfovibrio vulgaris).